A 217-amino-acid polypeptide reads, in one-letter code: GTPase IMAP family member GIMD1 (217 aa).

The region spanning 6-217 (KMIINLALFG…ENCYQVLTFK (212 aa)) is the AIG1-type G domain. Residues 15-23 (GMTQSGKSS), serine 36, and 148-150 (HAE) contribute to the GTP site.

Belongs to the TRAFAC class TrmE-Era-EngA-EngB-Septin-like GTPase superfamily. AIG1/Toc34/Toc159-like paraseptin GTPase family. IAN subfamily.

This Homo sapiens (Human) protein is GTPase IMAP family member GIMD1 (GIMD1).